The sequence spans 91 residues: UPF0213 protein NMA2126 (91 aa).

The GIY-YIG domain occupies 4–83 (SNWSLYLILC…AAQKRKLWEQ (80 aa)).

This sequence belongs to the UPF0213 family.

The chain is UPF0213 protein NMA2126 from Neisseria meningitidis serogroup A / serotype 4A (strain DSM 15465 / Z2491).